A 284-amino-acid polypeptide reads, in one-letter code: Bifunctional protein FolD (284 aa).

Residues Gly-166 to Ser-168 and Ile-232 each bind NADP(+).

The protein belongs to the tetrahydrofolate dehydrogenase/cyclohydrolase family. As to quaternary structure, homodimer.

The enzyme catalyses (6R)-5,10-methylene-5,6,7,8-tetrahydrofolate + NADP(+) = (6R)-5,10-methenyltetrahydrofolate + NADPH. It carries out the reaction (6R)-5,10-methenyltetrahydrofolate + H2O = (6R)-10-formyltetrahydrofolate + H(+). The protein operates within one-carbon metabolism; tetrahydrofolate interconversion. Its function is as follows. Catalyzes the oxidation of 5,10-methylenetetrahydrofolate to 5,10-methenyltetrahydrofolate and then the hydrolysis of 5,10-methenyltetrahydrofolate to 10-formyltetrahydrofolate. In Pseudomonas entomophila (strain L48), this protein is Bifunctional protein FolD.